A 228-amino-acid chain; its full sequence is L-ribulose-5-phosphate 4-epimerase UlaF (228 aa).

Substrate contacts are provided by residues 26 to 27 (GN), 43 to 44 (SG), and 72 to 73 (SS). Residues aspartate 74, histidine 93, and histidine 95 each contribute to the Zn(2+) site. Aspartate 118 serves as the catalytic Proton donor/acceptor. Histidine 167 serves as a coordination point for Zn(2+). The active-site Proton donor/acceptor is the tyrosine 225.

The protein belongs to the aldolase class II family. AraD/FucA subfamily. The cofactor is Zn(2+).

It carries out the reaction L-ribulose 5-phosphate = D-xylulose 5-phosphate. It functions in the pathway cofactor degradation; L-ascorbate degradation; D-xylulose 5-phosphate from L-ascorbate: step 4/4. Its function is as follows. Catalyzes the isomerization of L-ribulose 5-phosphate to D-xylulose 5-phosphate. Is involved in the anaerobic L-ascorbate utilization. This Escherichia coli O45:K1 (strain S88 / ExPEC) protein is L-ribulose-5-phosphate 4-epimerase UlaF.